Reading from the N-terminus, the 147-residue chain is METLTAISRWLEKQHVVTWCVQQEGELWCANAFYLFDTQKVAFYILTEEKTRHAQMSGPQAAVAGTVNGQPKTVALIRGVQFKGEIRRLEGEESDLARQAYNRRFPVARMLSAPVWEIRLDEIKFTDNTLGFGKKMIWLRNSGTEQA.

It belongs to the UPF0306 family.

The sequence is that of UPF0306 protein YhbP from Escherichia coli O7:K1 (strain IAI39 / ExPEC).